A 355-amino-acid polypeptide reads, in one-letter code: UDP-N-acetylglucosamine--N-acetylmuramyl-(pentapeptide) pyrophosphoryl-undecaprenol N-acetylglucosamine transferase (355 aa).

UDP-N-acetyl-alpha-D-glucosamine is bound by residues 15-17 (TGG), Asn127, Arg163, Ser191, Ile244, 263-268 (ALTVSE), and Gln288.

The protein belongs to the glycosyltransferase 28 family. MurG subfamily.

The protein resides in the cell inner membrane. The catalysed reaction is di-trans,octa-cis-undecaprenyl diphospho-N-acetyl-alpha-D-muramoyl-L-alanyl-D-glutamyl-meso-2,6-diaminopimeloyl-D-alanyl-D-alanine + UDP-N-acetyl-alpha-D-glucosamine = di-trans,octa-cis-undecaprenyl diphospho-[N-acetyl-alpha-D-glucosaminyl-(1-&gt;4)]-N-acetyl-alpha-D-muramoyl-L-alanyl-D-glutamyl-meso-2,6-diaminopimeloyl-D-alanyl-D-alanine + UDP + H(+). The protein operates within cell wall biogenesis; peptidoglycan biosynthesis. In terms of biological role, cell wall formation. Catalyzes the transfer of a GlcNAc subunit on undecaprenyl-pyrophosphoryl-MurNAc-pentapeptide (lipid intermediate I) to form undecaprenyl-pyrophosphoryl-MurNAc-(pentapeptide)GlcNAc (lipid intermediate II). This is UDP-N-acetylglucosamine--N-acetylmuramyl-(pentapeptide) pyrophosphoryl-undecaprenol N-acetylglucosamine transferase from Sodalis glossinidius (strain morsitans).